The following is a 1941-amino-acid chain: Integrin beta-like protein B (1941 aa).

The signal sequence occupies residues 1 to 20 (MKNIIKYLFIFLCFLIITEA). Residues 21 to 1871 (THFRYGTISW…VTTQNSSNKT (1851 aa)) lie on the Extracellular side of the membrane. The EGF-like domain occupies 420 to 457 (YGDKCTVLPPCKNGVPNGGVNGDGKCLCNNGWTGSDCS). 2 disulfide bridges follow: Cys430–Cys445 and Cys447–Cys456. In terms of domain architecture, VWFA spans 513–696 (DVYLLVDANM…AGIKAVSSKL (184 aa)). 10 N-linked (GlcNAc...) asparagine glycosylation sites follow: Asn1400, Asn1505, Asn1530, Asn1606, Asn1652, Asn1738, Asn1777, Asn1848, Asn1866, and Asn1869. A helical transmembrane segment spans residues 1872 to 1892 (VLSGAIAGAAAGTALIAAAMW). Over 1893 to 1941 (KMLRKAAPPTDAFFDEGAFLGDGVNSNPMYQESKNGGENPLYLASNETL) the chain is Cytoplasmic. The tract at residues 1921–1941 (MYQESKNGGENPLYLASNETL) is disordered.

It belongs to the SIB family. Interacts with talA/talin.

Its subcellular location is the membrane. Implicated in cellular adhesion. The sequence is that of Integrin beta-like protein B (sibB) from Dictyostelium discoideum (Social amoeba).